A 453-amino-acid polypeptide reads, in one-letter code: tRNA modification GTPase MnmE (453 aa).

Positions 22, 79, and 119 each coordinate (6S)-5-formyl-5,6,7,8-tetrahydrofolate. Residues 215-376 (GMKVVIAGRP…LRQHLKECMG (162 aa)) form the TrmE-type G domain. Asparagine 225 provides a ligand contact to K(+). GTP-binding positions include 225 to 230 (NAGKSS), 244 to 250 (TDIAGTT), 269 to 272 (DTAG), and 334 to 337 (NKAD). Serine 229 is a Mg(2+) binding site. The K(+) site is built by threonine 244, isoleucine 246, and threonine 249. Threonine 250 is a Mg(2+) binding site. Lysine 453 lines the (6S)-5-formyl-5,6,7,8-tetrahydrofolate pocket.

It belongs to the TRAFAC class TrmE-Era-EngA-EngB-Septin-like GTPase superfamily. TrmE GTPase family. As to quaternary structure, homodimer. Heterotetramer of two MnmE and two MnmG subunits. K(+) is required as a cofactor.

It is found in the cytoplasm. Functionally, exhibits a very high intrinsic GTPase hydrolysis rate. Involved in the addition of a carboxymethylaminomethyl (cmnm) group at the wobble position (U34) of certain tRNAs, forming tRNA-cmnm(5)s(2)U34. In Vibrio cholerae serotype O1 (strain ATCC 39315 / El Tor Inaba N16961), this protein is tRNA modification GTPase MnmE.